The chain runs to 327 residues: Undecaprenyl-phosphate 4-deoxy-4-formamido-L-arabinose transferase (327 aa).

Over methionine 1 to leucine 235 the chain is Cytoplasmic. The helical transmembrane segment at leucine 236–valine 256 threads the bilayer. At leucine 257 to glycine 269 the chain is on the periplasmic side. Residues valine 270–leucine 290 form a helical membrane-spanning segment. Over leucine 291–glutamine 327 the chain is Cytoplasmic.

Belongs to the glycosyltransferase 2 family.

The protein resides in the cell inner membrane. It catalyses the reaction UDP-4-deoxy-4-formamido-beta-L-arabinose + di-trans,octa-cis-undecaprenyl phosphate = 4-deoxy-4-formamido-alpha-L-arabinopyranosyl di-trans,octa-cis-undecaprenyl phosphate + UDP. It participates in glycolipid biosynthesis; 4-amino-4-deoxy-alpha-L-arabinose undecaprenyl phosphate biosynthesis; 4-amino-4-deoxy-alpha-L-arabinose undecaprenyl phosphate from UDP-4-deoxy-4-formamido-beta-L-arabinose and undecaprenyl phosphate: step 1/2. It functions in the pathway bacterial outer membrane biogenesis; lipopolysaccharide biosynthesis. Functionally, catalyzes the transfer of 4-deoxy-4-formamido-L-arabinose from UDP to undecaprenyl phosphate. The modified arabinose is attached to lipid A and is required for resistance to polymyxin and cationic antimicrobial peptides. This chain is Undecaprenyl-phosphate 4-deoxy-4-formamido-L-arabinose transferase, found in Salmonella paratyphi A (strain ATCC 9150 / SARB42).